A 365-amino-acid chain; its full sequence is Ribosomal RNA large subunit methyltransferase F (365 aa).

2 stretches are compositionally biased toward low complexity: residues 1–18 (MPKP…SPAG) and 30–42 (AKLK…AASK). Residues 1-50 (MPKPAIKTAAKPATSPAGKRAKPNTPQSVAKLKASTAKAASKPKAKLGEK) form a disordered region.

The protein belongs to the methyltransferase superfamily. METTL16/RlmF family.

It localises to the cytoplasm. It catalyses the reaction adenosine(1618) in 23S rRNA + S-adenosyl-L-methionine = N(6)-methyladenosine(1618) in 23S rRNA + S-adenosyl-L-homocysteine + H(+). Its function is as follows. Specifically methylates the adenine in position 1618 of 23S rRNA. The sequence is that of Ribosomal RNA large subunit methyltransferase F from Shewanella oneidensis (strain ATCC 700550 / JCM 31522 / CIP 106686 / LMG 19005 / NCIMB 14063 / MR-1).